An 89-amino-acid polypeptide reads, in one-letter code: Small ribosomal subunit protein bS20 (89 aa).

This sequence belongs to the bacterial ribosomal protein bS20 family.

In terms of biological role, binds directly to 16S ribosomal RNA. The protein is Small ribosomal subunit protein bS20 of Helicobacter pylori (strain ATCC 700392 / 26695) (Campylobacter pylori).